The following is a 137-amino-acid chain: Bombinin-like peptides 1 (137 aa).

The first 18 residues, Met-1–Ala-18, serve as a signal peptide directing secretion. Asn-70 is modified (asparagine amide). A disordered region spans residues Leu-91–Glu-112. The residue at position 118 (Ile-118) is a D-allo-isoleucine. Ile-136 is modified (isoleucine amide).

It belongs to the bombinin family. Expressed by the skin glands.

The protein localises to the secreted. In terms of biological role, has antimicrobial activity, but no hemolytic activity. Preliminary evidence indicates that this peptide does not lyse and thus kill the bacteria by its antimicrobial activity. Functionally, bombinin H has antibacterial and hemolytic activity. This is Bombinin-like peptides 1 from Bombina variegata (Yellow-bellied toad).